Here is a 363-residue protein sequence, read N- to C-terminus: Galactokinase (363 aa).

16 to 19 (EHTD) lines the substrate pocket. Residues S50 and 103–109 (GSGLSSS) each bind ATP. Mg(2+) is bound by residues S109 and E141. The active-site Proton acceptor is D153. Residue Y205 coordinates substrate.

The protein belongs to the GHMP kinase family. GalK subfamily.

The protein localises to the cytoplasm. It carries out the reaction alpha-D-galactose + ATP = alpha-D-galactose 1-phosphate + ADP + H(+). It participates in carbohydrate metabolism; galactose metabolism. Its function is as follows. Catalyzes the transfer of the gamma-phosphate of ATP to D-galactose to form alpha-D-galactose-1-phosphate (Gal-1-P). The chain is Galactokinase from Mycobacterium tuberculosis (strain ATCC 25177 / H37Ra).